We begin with the raw amino-acid sequence, 59 residues long: Large ribosomal subunit protein bL32 (59 aa).

Residues Met1–Asp59 form a disordered region. 2 stretches are compositionally biased toward basic residues: residues Ser9 to His19 and Arg49 to Asp59.

Belongs to the bacterial ribosomal protein bL32 family.

This is Large ribosomal subunit protein bL32 from Cupriavidus necator (strain ATCC 17699 / DSM 428 / KCTC 22496 / NCIMB 10442 / H16 / Stanier 337) (Ralstonia eutropha).